We begin with the raw amino-acid sequence, 190 residues long: Protein A52 (190 aa).

The protein belongs to the orthopoxvirus A52R protein family. In terms of assembly, interacts with host TRAF6 and IRAK2.

Bcl-2-like protein which targets host toll-like receptor signaling complexes to suppress innate immune response. Interacts with host TRAF6 to activate p38 and subsequently induce the expression of several cytokines such as IL-10. Also associates with host IRAK2 to inhibit NF-kappa-B signaling. The chain is Protein A52 from Vaccinia virus (strain Western Reserve) (VACV).